The sequence spans 153 residues: Superoxide dismutase [Cu-Zn] (153 aa).

Cu cation-binding residues include H46, H48, and H63. The cysteines at positions 57 and 146 are disulfide-linked. The Zn(2+) site is built by H63, H71, H80, and D83. H120 serves as a coordination point for Cu cation.

Belongs to the Cu-Zn superoxide dismutase family. Homodimer. Cu cation serves as cofactor. It depends on Zn(2+) as a cofactor.

Its subcellular location is the cytoplasm. It catalyses the reaction 2 superoxide + 2 H(+) = H2O2 + O2. Its function is as follows. Destroys radicals which are normally produced within the cells and which are toxic to biological systems. This is Superoxide dismutase [Cu-Zn] (SODCC) from Solidago canadensis var. scabra (Tall goldenrod).